The chain runs to 185 residues: Peptidyl-tRNA hydrolase (185 aa).

Y14 provides a ligand contact to tRNA. H19 functions as the Proton acceptor in the catalytic mechanism. Positions 64, 66, and 112 each coordinate tRNA.

Belongs to the PTH family. In terms of assembly, monomer.

It localises to the cytoplasm. The enzyme catalyses an N-acyl-L-alpha-aminoacyl-tRNA + H2O = an N-acyl-L-amino acid + a tRNA + H(+). Hydrolyzes ribosome-free peptidyl-tRNAs (with 1 or more amino acids incorporated), which drop off the ribosome during protein synthesis, or as a result of ribosome stalling. Functionally, catalyzes the release of premature peptidyl moieties from peptidyl-tRNA molecules trapped in stalled 50S ribosomal subunits, and thus maintains levels of free tRNAs and 50S ribosomes. This is Peptidyl-tRNA hydrolase from Pediococcus pentosaceus (strain ATCC 25745 / CCUG 21536 / LMG 10740 / 183-1w).